A 365-amino-acid chain; its full sequence is MNLAAMDPTTYDVQLETKRVKLTQLFADFDTPELETFSSEPAHYRMRAEFRVWHEGEDLYYYMFDKELNSKVRCDQFLPASELINKMMPALVELLKPNTILRHRLFQIDFLSTLSGEILVSLLYHKQLDSEWEQQAKILKQTLSTQFNVNLIGRARKQKIIFDKDFVVESLNVAGKQLQYHQIENSFTQPNGKVSVKMLEWAIDVTKNSTGDLLELYCGNGNFSIALAQNFDRVLATELAKPSVESAQYNIKVNQVENLQIIRMSAEDFTEAMAKKRSFRRLEGIDLDSYNCNTIFVDPPRAGLDADTVKLVQGYERIVYISCNPHTLLDNLAELSKTHKITRFALFDQFPYTDHMESGVFLEKR.

Residues Q189, Y217, N222, E238, and D298 each coordinate S-adenosyl-L-methionine. The active-site Nucleophile is C323. E357 functions as the Proton acceptor in the catalytic mechanism.

Belongs to the class I-like SAM-binding methyltransferase superfamily. RNA M5U methyltransferase family. TrmA subfamily.

It carries out the reaction uridine(54) in tRNA + S-adenosyl-L-methionine = 5-methyluridine(54) in tRNA + S-adenosyl-L-homocysteine + H(+). It catalyses the reaction uridine(341) in tmRNA + S-adenosyl-L-methionine = 5-methyluridine(341) in tmRNA + S-adenosyl-L-homocysteine + H(+). Dual-specificity methyltransferase that catalyzes the formation of 5-methyluridine at position 54 (m5U54) in all tRNAs, and that of position 341 (m5U341) in tmRNA (transfer-mRNA). The sequence is that of tRNA/tmRNA (uracil-C(5))-methyltransferase from Shewanella halifaxensis (strain HAW-EB4).